We begin with the raw amino-acid sequence, 104 residues long: UPF0235 protein MTH_637 (104 aa).

It belongs to the UPF0235 family.

The sequence is that of UPF0235 protein MTH_637 from Methanothermobacter thermautotrophicus (strain ATCC 29096 / DSM 1053 / JCM 10044 / NBRC 100330 / Delta H) (Methanobacterium thermoautotrophicum).